Here is a 172-residue protein sequence, read N- to C-terminus: Co-chaperone protein HscB homolog (172 aa).

The region spanning 2–69 (NHFELFNLPV…DSRAAYLLAL (68 aa)) is the J domain.

It belongs to the HscB family. Interacts with HscA and stimulates its ATPase activity.

Functionally, co-chaperone involved in the maturation of iron-sulfur cluster-containing proteins. Seems to help targeting proteins to be folded toward HscA. This Acinetobacter baumannii (strain SDF) protein is Co-chaperone protein HscB homolog.